The primary structure comprises 711 residues: Ribosomal RNA large subunit methyltransferase K/L (711 aa).

The region spanning 43–154 (LAYRITLWTR…NGVITIAMNF (112 aa)) is the THUMP domain.

The protein belongs to the methyltransferase superfamily. RlmKL family.

It is found in the cytoplasm. It catalyses the reaction guanosine(2445) in 23S rRNA + S-adenosyl-L-methionine = N(2)-methylguanosine(2445) in 23S rRNA + S-adenosyl-L-homocysteine + H(+). The enzyme catalyses guanosine(2069) in 23S rRNA + S-adenosyl-L-methionine = N(2)-methylguanosine(2069) in 23S rRNA + S-adenosyl-L-homocysteine + H(+). Its function is as follows. Specifically methylates the guanine in position 2445 (m2G2445) and the guanine in position 2069 (m7G2069) of 23S rRNA. This Shewanella oneidensis (strain ATCC 700550 / JCM 31522 / CIP 106686 / LMG 19005 / NCIMB 14063 / MR-1) protein is Ribosomal RNA large subunit methyltransferase K/L.